Reading from the N-terminus, the 260-residue chain is Acetyl-coenzyme A carboxylase carboxyl transferase subunit alpha (260 aa).

The CoA carboxyltransferase C-terminal domain occupies 1–235 (MSAYDKVMAA…SNKILHSINK (235 aa)).

The protein belongs to the AccA family. Acetyl-CoA carboxylase is a heterohexamer composed of biotin carboxyl carrier protein (AccB), biotin carboxylase (AccC) and two subunits each of ACCase subunit alpha (AccA) and ACCase subunit beta (AccD).

Its subcellular location is the cytoplasm. The catalysed reaction is N(6)-carboxybiotinyl-L-lysyl-[protein] + acetyl-CoA = N(6)-biotinyl-L-lysyl-[protein] + malonyl-CoA. Its pathway is lipid metabolism; malonyl-CoA biosynthesis; malonyl-CoA from acetyl-CoA: step 1/1. Component of the acetyl coenzyme A carboxylase (ACC) complex. First, biotin carboxylase catalyzes the carboxylation of biotin on its carrier protein (BCCP) and then the CO(2) group is transferred by the carboxyltransferase to acetyl-CoA to form malonyl-CoA. This chain is Acetyl-coenzyme A carboxylase carboxyl transferase subunit alpha, found in Ruminiclostridium cellulolyticum (strain ATCC 35319 / DSM 5812 / JCM 6584 / H10) (Clostridium cellulolyticum).